Reading from the N-terminus, the 168-residue chain is MKNTDPVANTKIYLATSFFNEEQRARIPQALAQLEANPTVGVVHQPFDFQYKDARVDSDPAGVFGSLEWQIATYNNDLNAVGTSDVCVALYDMDQIDEGICMEIGMFVALHKPIVLLPFTKKDKSAYEANLMLARGVTTWLEPNDFSPLKDFNFNHPMAQPFPPFKVF.

Catalysis depends on E103, which acts as the Nucleophile.

This sequence belongs to the nucleoside deoxyribosyltransferase family.

It carries out the reaction 2-deoxy-D-ribosyl-base(1) + base(2) = 2-deoxy-D-ribosyl-base(2) + base(1).. The protein operates within nucleotide metabolism; nucleotide salvage pathway. Catalyzes the cleavage of the glycosidic bond of 2'-deoxyribonucleosides and the transfer of the deoxyribosyl moiety to an acceptor purine or pyrimidine base. In Limosilactobacillus fermentum (Lactobacillus fermentum), this protein is Nucleoside deoxyribosyltransferase (ntd).